A 145-amino-acid polypeptide reads, in one-letter code: Anaerobic nitrite reductase NSHB5 (145 aa).

The Globin domain occupies 2–142 (GFSETQEELV…LAAAIKEEMK (141 aa)). The short motif at 35 to 39 (EIAPA) is the Homodimerization element. Positions 45, 59, 61, 84, 88, and 89 each coordinate heme b. A Homodimerization motif is present at residues 96–108 (DAHFEVVKTALLD).

The protein belongs to the plant globin family. Homodimer. The cofactor is heme b. Expressed in embryonic (embryos, coleoptiles and seminal roots) and vegetative (leaves and roots) organs.

It localises to the cytoplasm. The protein resides in the nucleus. It carries out the reaction Fe(III)-heme b-[protein] + nitric oxide + H2O = Fe(II)-heme b-[protein] + nitrite + 2 H(+). In terms of biological role, phytoglobin that reduces nitrite to nitric oxide under anoxic conditions (e.g. during flooding or in waterlogged soil). May not function as an oxygen storage or transport protein. Has an unusually high affinity for O(2) through an hexacoordinate heme iron because of a very low dissociation constant. The polypeptide is Anaerobic nitrite reductase NSHB5 (Oryza sativa subsp. indica (Rice)).